The chain runs to 492 residues: Zinc finger protein 385B (492 aa).

Matrin-type zinc fingers lie at residues 8 to 44 (KKLL…VKQL) and 143 to 173 (ISCN…KLKA). Positions 159-206 (EAHYKGSKHAKKLKAQESPKNKQKSAVAQDSGTKTITSTSTNTTTTTT) are disordered. Low complexity predominate over residues 189–206 (SGTKTITSTSTNTTTTTT). 2 consecutive Matrin-type zinc fingers follow at residues 303–337 (KKLL…LEAR) and 371–401 (FHCE…RVAG). The disordered stretch occupies residues 388–420 (QHISSRRHKDRVAGKPTKPKYSPYNKQQRSSSS).

The protein resides in the nucleus. In terms of biological role, may play a role in p53/TP53-mediated apoptosis. This Danio rerio (Zebrafish) protein is Zinc finger protein 385B (znf385b).